We begin with the raw amino-acid sequence, 525 residues long: Peptide chain release factor 3 (525 aa).

The tr-type G domain occupies 8–276; that stretch reads AMRRTFAIIS…AFVKEAPPPQ (269 aa). GTP is bound by residues 17 to 24, 85 to 89, and 139 to 142; these read SHPDAGKT, DTPGH, and NKMD.

This sequence belongs to the TRAFAC class translation factor GTPase superfamily. Classic translation factor GTPase family. PrfC subfamily.

It is found in the cytoplasm. In terms of biological role, increases the formation of ribosomal termination complexes and stimulates activities of RF-1 and RF-2. It binds guanine nucleotides and has strong preference for UGA stop codons. It may interact directly with the ribosome. The stimulation of RF-1 and RF-2 is significantly reduced by GTP and GDP, but not by GMP. This chain is Peptide chain release factor 3, found in Coxiella burnetii (strain RSA 331 / Henzerling II).